The primary structure comprises 2097 residues: MIRYQIRNEYGLSDPELYAPGEKDDPEALLEGVAMAGLVGVLRQLGDLAEFAAEIFHDLHEDVMATASRGHGLMLRLRQLEAEFPAVEKAIISQSDHSNYPHDDGVEWHTNLQIDQNMITQGDMPRFILDSYEECRGPPRLFTLDKFDVAGAGASLKRYSDPSFFKTEHSSDMIETDAVIEKKPRKIKKKALRWRKGETLESLLIANSESHTTSKDRSSRKVPPRTTKLKYRYPRESDHKNISRICREHLQEIISSQQKIFSNYSSRYYHPKFRLTESSETASSFGEIDNFSARAQSSAKLELTKVVPINEFDTKGIAPTHINGSDCLEALEADDRQLQATQHEPDKVEDVCKRSLVEQNAMLSNSDRMQSVQEENLLSAMVPADQNDDRCRPDDTGSDQENFVDALNNMESEGEAHAEMKIKKDPGAKMELDELNFHRDEGENERHTEFSELGHVIDSSPWLNDSYNGGEPNHAISSNTNFSGVDCTNDEEPSNDVDLMEMDVSSSSSVFSDDNDVFRTNGNMNGFQQYQEASLSNDHHAVIAHSSDKQSSQKSSGLDGSSIESNDFIEKPFHSLEDDKNFAPDGTSVILGRPNDVSQCEEEIEVGNADDSLLQPTISNQEVHRSNNQLEGVAMHASISSGKVASFPDMDPGMCTKDLELDNVLVPKETVANTPPTGLGTDHIHEHVDELDSGVAPINSSIQSDSTYESDDDDMAEDLNSLPEDDLYKHDVEDLYKHVLEDDGIIALGKGPCSTRANMHQEDPMEVSDVRGDFSNGQELPVLTETASPQGELVGGGELPLLTETASPQGGEEDLADEVVVISSRDLNDEKKPSLAEVPLACGDASLLDSSASCLEHDESTETGEIAKSDEVLVNVEVAEESITGRFTDDMTPFQEDLPDGAKYSEDAEFLANPRVDNSRHDVQLQSSSPCREELETVKAPCENLCALDESREHIFEKSVLQINNLPQHIETKNTGEACSDIDDIQHLSALHCPKNPVCQEELPDETNLSADVQYHCDVEKGGAVILNSKMVEEQPENIDLVREPRAQDSFGTNPFMDPGYKANHALADPCPSYQPCFSEEEQDFISELLIPHGNMGIEDLNPVPVADSLWEPATPPDEVPLPSEVMTEEDFRSFCHEYHEMDLTATPESIDDKPASDSNVVSSSLVTSESEFLYCVSAVRTGVDQEESRDAPDDTLMHFSAKADPDDKAANSDLKSDEPFIDEKIHELGVPSVPMELEVEQHALHEVDSHGDSQLLDNDMIDETCSSPSGNSIAVKDKQETCANLVSRAFINERTDELEVPVSNSVLLEPSEEVHDSDEYNYQDVPWSSTDEGRDEVDAHPLSKRIQTQGSEALVLGELDSRAVPSCSVNEMADHVDAPPLSTVLEAEQEPEDCISGEHNSQVTKSSLVDEKIGELDDASPLSNTLLAEMEREVCVPGKSASQIASCSPTPSNEKIDELNAPPLSSSGLIELESEDSVSGDLDSQIIPCSSPNDKTNEPDGATSTHVLPVELEQEVCSFPELDSLVAPCSLNDDKVCELDEPPCKQLESENGSYCLPQVDCQIEPCYSESVVLSEASTMSSANAMPSTEETYRLSSPVPPPNEPFSNVSYEDPQKPPPLPPLLWRLGKPRLGIASTKGHMLEPERGKGPVLHTSDAGMDNMPGCLSGMTESIEPVSSQEIKERHLDPILDNNERGVEFRRLATPPTANDVAVTEHVQLFSDACENIKHQERVSSSETEAEEHQNGTGITDVMDSHPPKPLFLVPSISQQGLQGSVFPSDTSDNGEHSSYTSRAVSEDEKTVDDHNAACAMDLHITSSSASSHVSENGCNQQSHGESLPVTSVDKVHTSDASCEDNKLKNHFITSEVCSDATNLSASGLLTEEENIHNVEDQYEGPLPSEESSGCLDYPHDDHNSEKEDIHQPDGYAASPGNNNHFDSSHEGGYLHAEQPPVMGWTVRPQMLHPNYGISMEENQFEPKVEDHLLIKKPVSIRNIPRNPLVDAVAAHDRSTMRKVSELVAPTDKSKPNERNLLLEQIRNKTFNLKPVSSAKQPTIRTPPRASTRNLKVAAIIEKANAIRQAVGSDDEDGDNWSESSDT.

7 disordered regions span residues 205-227 (IANSESHTTSKDRSSRKVPPRTT), 544-565 (AHSSDKQSSQKSSGLDGSSIES), 1443-1467 (SQIASCSPTPSNEKIDELNAPPLSS), 1588-1616 (STEETYRLSSPVPPPNEPFSNVSYEDPQK), 1730-1802 (QERV…EKTV), 1820-1842 (ASSHVSENGCNQQSHGESLPVTS), and 1893-1944 (YEGP…EGGY). Positions 549–562 (KQSSQKSSGLDGSS) are enriched in low complexity. Positions 1443 to 1454 (SQIASCSPTPSN) are enriched in polar residues. Residues 1766–1794 (SISQQGLQGSVFPSDTSDNGEHSSYTSRA) show a composition bias toward polar residues. The span at 1908–1922 (YPHDDHNSEKEDIHQ) shows a compositional bias: basic and acidic residues. Positions 2028-2046 (ERNLLLEQIRNKTFNLKPV) constitute a WH2 domain.

It belongs to the SCAR/WAVE family.

Its subcellular location is the cytoplasm. The protein localises to the cytoskeleton. Its function is as follows. Involved in regulation of actin and microtubule organization. Part of a WAVE complex that activates the Arp2/3 complex. The sequence is that of SCAR-like protein 1 from Oryza sativa subsp. japonica (Rice).